The chain runs to 460 residues: Bifunctional protein GlmU (460 aa).

Residues 1–229 form a pyrophosphorylase region; that stretch reads MTNYAIILAA…FNESLGVNDR (229 aa). UDP-N-acetyl-alpha-D-glucosamine-binding positions include 8–11, lysine 22, glutamine 72, and 77–78; these read LAAG and GT. Residue aspartate 102 participates in Mg(2+) binding. UDP-N-acetyl-alpha-D-glucosamine is bound by residues glycine 139, glutamate 154, asparagine 169, and asparagine 227. Mg(2+) is bound at residue asparagine 227. Positions 230-250 are linker; it reads VALATAETVMRQRITQKHMVN. The interval 251–460 is N-acetyltransferase; that stretch reads GVTFQNPETV…RLAHHPSRSK (210 aa). Arginine 332 and lysine 350 together coordinate UDP-N-acetyl-alpha-D-glucosamine. The active-site Proton acceptor is histidine 362. UDP-N-acetyl-alpha-D-glucosamine-binding residues include tyrosine 365 and asparagine 376. Acetyl-CoA-binding positions include alanine 379, 385 to 386, serine 404, alanine 422, and arginine 439; that span reads NY.

It in the N-terminal section; belongs to the N-acetylglucosamine-1-phosphate uridyltransferase family. This sequence in the C-terminal section; belongs to the transferase hexapeptide repeat family. Homotrimer. It depends on Mg(2+) as a cofactor.

It is found in the cytoplasm. It catalyses the reaction alpha-D-glucosamine 1-phosphate + acetyl-CoA = N-acetyl-alpha-D-glucosamine 1-phosphate + CoA + H(+). The catalysed reaction is N-acetyl-alpha-D-glucosamine 1-phosphate + UTP + H(+) = UDP-N-acetyl-alpha-D-glucosamine + diphosphate. Its pathway is nucleotide-sugar biosynthesis; UDP-N-acetyl-alpha-D-glucosamine biosynthesis; N-acetyl-alpha-D-glucosamine 1-phosphate from alpha-D-glucosamine 6-phosphate (route II): step 2/2. It functions in the pathway nucleotide-sugar biosynthesis; UDP-N-acetyl-alpha-D-glucosamine biosynthesis; UDP-N-acetyl-alpha-D-glucosamine from N-acetyl-alpha-D-glucosamine 1-phosphate: step 1/1. The protein operates within bacterial outer membrane biogenesis; LPS lipid A biosynthesis. Catalyzes the last two sequential reactions in the de novo biosynthetic pathway for UDP-N-acetylglucosamine (UDP-GlcNAc). The C-terminal domain catalyzes the transfer of acetyl group from acetyl coenzyme A to glucosamine-1-phosphate (GlcN-1-P) to produce N-acetylglucosamine-1-phosphate (GlcNAc-1-P), which is converted into UDP-GlcNAc by the transfer of uridine 5-monophosphate (from uridine 5-triphosphate), a reaction catalyzed by the N-terminal domain. This is Bifunctional protein GlmU from Streptococcus pyogenes serotype M12 (strain MGAS9429).